The primary structure comprises 449 residues: MGTLFGTDGIRGVANRYPMDAPMAFAVGQAVTYVLKKEKHRTRIIIGKDTRISGYMLESALLAGITSMGGNPYLVGVLPTPGIAFITESMRADAGIVISASHNPYQDNGIKIFGGNGFKLSDEQEEVIENLVLDGKLADKVPPVDRMGQAHRIDDVLGRYIVFLKNTFPRELSMEGMKIVMDTANGATYRVAPESFTELGADLDVIHNAPNGININAACGSQHTEDLRKRVVEKGAAIGLAFDGDGDRLIAVDEQGREITGDQILIICGKMLKGKGRLKNDLLVSTVMSNLGLTVACKKYGFRQHAAKVGDRYVLEDMQRLGSVLGGEESGHVIFLDHHTTGDGILTAIQLIAAMLESGKPLSELARLMDVFPQKLINIDVKSKPDISTLPQVVQAVKDVESALGDQGRVLVRYSGTQNMCRVMVEGPSDEITLKYCRQIADVVKAAIG.

Ser101 (phosphoserine intermediate) is an active-site residue. Mg(2+) is bound by residues Ser101, Asp243, Asp245, and Asp247. At Ser101 the chain carries Phosphoserine.

Belongs to the phosphohexose mutase family. Mg(2+) serves as cofactor. Activated by phosphorylation.

The enzyme catalyses alpha-D-glucosamine 1-phosphate = D-glucosamine 6-phosphate. Functionally, catalyzes the conversion of glucosamine-6-phosphate to glucosamine-1-phosphate. This Syntrophobacter fumaroxidans (strain DSM 10017 / MPOB) protein is Phosphoglucosamine mutase.